A 441-amino-acid chain; its full sequence is Methionine gamma-lyase (441 aa).

The interval Met1–Asp25 is disordered. N6-(pyridoxal phosphate)lysine is present on Lys248.

The protein belongs to the trans-sulfuration enzymes family. As to quaternary structure, homotetramer. Requires pyridoxal 5'-phosphate as cofactor. Expressed in roots, stems, siliques, leaves, flowers and seeds after imbibition (at protein level). Transcripts accumulate in dry mature seeds, but at protein level, only present upon imbibition.

The protein resides in the cytoplasm. It catalyses the reaction L-methionine + H2O = methanethiol + 2-oxobutanoate + NH4(+). Functionally, catalyzes the degradation of L-methionine to alpha-ketobutyrate, methanethiol and ammonia. Exhibits a high activity toward L-methionine, L-ethionine, L-homocysteine and seleno-L-methionine, but not L-cysteine. Involved in an alternative cysteine biosynthesis pathway to the reverse trans-sulfuration pathway (methionine-&gt;homocysteine-&gt;cystathionine-&gt;cysteine) in which methanethiol is an intermediate. Also mediates an alternative isoleucine biosynthesis pathway in which 2-ketobutyrate is an intermediate. This Arabidopsis thaliana (Mouse-ear cress) protein is Methionine gamma-lyase (MGL).